Consider the following 371-residue polypeptide: Protein MxiG (371 aa).

Residues V127–F141 form a helical membrane-spanning segment.

It localises to the cell inner membrane. The protein resides in the cell outer membrane. Functionally, involved in the secretion of the Ipa antigens. Involved in the intracellular dissemination of Shigella. Part of the Mxi-Spa secretion apparatus. The sequence is that of Protein MxiG (mxiG) from Shigella flexneri.